We begin with the raw amino-acid sequence, 178 residues long: Large ribosomal subunit protein uL5 (178 aa).

N-acetylalanine is present on Ala-2. Residue Lys-38 forms a Glycyl lysine isopeptide (Lys-Gly) (interchain with G-Cter in SUMO2) linkage. A phosphothreonine mark is found at Thr-44 and Thr-47. Lys-52 bears the N6-acetyllysine; alternate mark. Lys-52 is covalently cross-linked (Glycyl lysine isopeptide (Lys-Gly) (interchain with G-Cter in SUMO2); alternate). At Lys-85 the chain carries N6-acetyllysine. Lys-154 participates in a covalent cross-link: Glycyl lysine isopeptide (Lys-Gly) (interchain with G-Cter in SUMO2).

This sequence belongs to the universal ribosomal protein uL5 family. Component of the large ribosomal subunit (LSU). Part of the 5S RNP complex, which is a LSU subcomplex composed of the 5S RNA, RPL5 and RPL11. Component of a hexameric 5S RNP precursor complex, composed of 5S RNA, RRS1, RPF2/BXDC1, RPL5, RPL11 and HEATR3; this complex acts as a precursor for ribosome assembly. Interacts with PML. Interacts with MDM2 (via its RanBP2-type zinc finger domain); negatively regulates MDM2-mediated TP53 ubiquitination and degradation. Interacts with NOP53; retains RPL11 into the nucleolus.

The protein localises to the nucleus. It is found in the nucleolus. Its subcellular location is the cytoplasm. In terms of biological role, component of the ribosome, a large ribonucleoprotein complex responsible for the synthesis of proteins in the cell. The small ribosomal subunit (SSU) binds messenger RNAs (mRNAs) and translates the encoded message by selecting cognate aminoacyl-transfer RNA (tRNA) molecules. The large subunit (LSU) contains the ribosomal catalytic site termed the peptidyl transferase center (PTC), which catalyzes the formation of peptide bonds, thereby polymerizing the amino acids delivered by tRNAs into a polypeptide chain. The nascent polypeptides leave the ribosome through a tunnel in the LSU and interact with protein factors that function in enzymatic processing, targeting, and the membrane insertion of nascent chains at the exit of the ribosomal tunnel. As part of the 5S RNP/5S ribonucleoprotein particle it is an essential component of the LSU, required for its formation and the maturation of rRNAs. It also couples ribosome biogenesis to p53/TP53 activation. As part of the 5S RNP it accumulates in the nucleoplasm and inhibits MDM2, when ribosome biogenesis is perturbed, mediating the stabilization and the activation of TP53. Promotes nucleolar location of PML. In Oryctolagus cuniculus (Rabbit), this protein is Large ribosomal subunit protein uL5 (RPL11).